A 24-amino-acid polypeptide reads, in one-letter code: Caerulein precursor fragment BM1 (24 aa).

Expressed by the skin glands.

The protein resides in the secreted. Antimicrobial peptide. The sequence is that of Caerulein precursor fragment BM1 from Xenopus boumbaensis (Mawa clawed frog).